We begin with the raw amino-acid sequence, 610 residues long: DNA mismatch repair protein MutL (610 aa).

This sequence belongs to the DNA mismatch repair MutL/HexB family.

This protein is involved in the repair of mismatches in DNA. It is required for dam-dependent methyl-directed DNA mismatch repair. May act as a 'molecular matchmaker', a protein that promotes the formation of a stable complex between two or more DNA-binding proteins in an ATP-dependent manner without itself being part of a final effector complex. The sequence is that of DNA mismatch repair protein MutL from Rickettsia rickettsii (strain Iowa).